The primary structure comprises 58 residues: MKRQKRDKLTRAHSKGYQAGISGRSKDICPFQQNDARSEWLGGWREAVEDRHVGLSVK.

Residues 1 to 14 (MKRQKRDKLTRAHS) show a composition bias toward basic residues. Positions 1–25 (MKRQKRDKLTRAHSKGYQAGISGRS) are disordered.

It belongs to the ribosome modulation factor family.

It is found in the cytoplasm. In terms of biological role, during stationary phase, converts 70S ribosomes to an inactive dimeric form (100S ribosomes). The sequence is that of Ribosome modulation factor from Alteromonas naphthalenivorans.